Consider the following 351-residue polypeptide: Protein MGF 360-12L (351 aa).

The ANK repeat unit spans residues 57–89; it reads DLNMALVKAVKENNYSLIKLFTEWGANINYGLI.

The protein belongs to the asfivirus MGF 360 family.

Plays a role in virus cell tropism, and may be required for efficient virus replication in macrophages. This is Protein MGF 360-12L from Ornithodoros (relapsing fever ticks).